Consider the following 131-residue polypeptide: UPF0102 protein YraN (131 aa).

The protein belongs to the UPF0102 family.

The protein is UPF0102 protein YraN of Salmonella agona (strain SL483).